Reading from the N-terminus, the 285-residue chain is Phosphatidylserine decarboxylase proenzyme (285 aa).

Active-site charge relay system; for autoendoproteolytic cleavage activity residues include D89, H146, and S252. S252 acts as the Schiff-base intermediate with substrate; via pyruvic acid; for decarboxylase activity in catalysis. Residue S252 is modified to Pyruvic acid (Ser); by autocatalysis.

The protein belongs to the phosphatidylserine decarboxylase family. PSD-B subfamily. Prokaryotic type I sub-subfamily. In terms of assembly, heterodimer of a large membrane-associated beta subunit and a small pyruvoyl-containing alpha subunit. Pyruvate serves as cofactor. Is synthesized initially as an inactive proenzyme. Formation of the active enzyme involves a self-maturation process in which the active site pyruvoyl group is generated from an internal serine residue via an autocatalytic post-translational modification. Two non-identical subunits are generated from the proenzyme in this reaction, and the pyruvate is formed at the N-terminus of the alpha chain, which is derived from the carboxyl end of the proenzyme. The autoendoproteolytic cleavage occurs by a canonical serine protease mechanism, in which the side chain hydroxyl group of the serine supplies its oxygen atom to form the C-terminus of the beta chain, while the remainder of the serine residue undergoes an oxidative deamination to produce ammonia and the pyruvoyl prosthetic group on the alpha chain. During this reaction, the Ser that is part of the protease active site of the proenzyme becomes the pyruvoyl prosthetic group, which constitutes an essential element of the active site of the mature decarboxylase.

The protein resides in the cell membrane. It carries out the reaction a 1,2-diacyl-sn-glycero-3-phospho-L-serine + H(+) = a 1,2-diacyl-sn-glycero-3-phosphoethanolamine + CO2. Its pathway is phospholipid metabolism; phosphatidylethanolamine biosynthesis; phosphatidylethanolamine from CDP-diacylglycerol: step 2/2. Functionally, catalyzes the formation of phosphatidylethanolamine (PtdEtn) from phosphatidylserine (PtdSer). This is Phosphatidylserine decarboxylase proenzyme from Vibrio cholerae serotype O1 (strain ATCC 39541 / Classical Ogawa 395 / O395).